A 140-amino-acid chain; its full sequence is Putative pre-16S rRNA nuclease (140 aa).

Belongs to the YqgF nuclease family.

Its subcellular location is the cytoplasm. Could be a nuclease involved in processing of the 5'-end of pre-16S rRNA. The chain is Putative pre-16S rRNA nuclease from Endomicrobium trichonymphae.